The chain runs to 455 residues: MERIERDTLGEISVDATKYWGAQTERSKRNFAIGDNPMPIEIIYAFAQLKKATAKVNAAEGKLAEEKAIAIGQVCDQIIQGELDEHFPLVVWQTGSGTQSNMNVNEVIAHVANLTLGEGQIHPNDDVNMSQSSNDTFPTAMHIAAYGALVTKLLPEITKMEAVLTEKKNKYMHLVKIGRTHLQDATPLTLGQEISGWEACLTNNKNYLETSMKAILPLAIGGTAVGTGLNASRDFGDKVAEELMKQTGYPFTSDSNKYFALTSHSPINFVHGAIRSLASDLMKIANDIRLLASGPRSGIGELEIPANEPGSSIMPGKVNPTQCEAITMVAAQVMGNDVTINVAASQGNFELNVYKPVIIFNFLESIKLLADSMRSFRVHCLEGLTANEKVIETKVNDSLMLVTALNPHIGYEKAAKIAKLAFDENTTLKEAAIKTGFVTEKEFDLWINPLKMTNL.

Residues 96 to 98 (SGT), 122 to 125 (HPND), 132 to 134 (SSN), and threonine 180 contribute to the substrate site. Residue histidine 181 is the Proton donor/acceptor of the active site. Serine 311 is a catalytic residue. Residues serine 312 and 317 to 319 (KVN) each bind substrate.

The protein belongs to the class-II fumarase/aspartase family. Fumarase subfamily. Homotetramer.

It localises to the cytoplasm. The enzyme catalyses (S)-malate = fumarate + H2O. The protein operates within carbohydrate metabolism; tricarboxylic acid cycle; (S)-malate from fumarate: step 1/1. Functionally, involved in the TCA cycle. Catalyzes the stereospecific interconversion of fumarate to L-malate. This is Fumarate hydratase class II from Listeria monocytogenes serovar 1/2a (strain ATCC BAA-679 / EGD-e).